We begin with the raw amino-acid sequence, 405 residues long: NADH-quinone oxidoreductase subunit D (405 aa).

It belongs to the complex I 49 kDa subunit family. NDH-1 is composed of 14 different subunits. Subunits NuoB, C, D, E, F, and G constitute the peripheral sector of the complex.

The protein resides in the cell inner membrane. The catalysed reaction is a quinone + NADH + 5 H(+)(in) = a quinol + NAD(+) + 4 H(+)(out). Functionally, NDH-1 shuttles electrons from NADH, via FMN and iron-sulfur (Fe-S) centers, to quinones in the respiratory chain. The immediate electron acceptor for the enzyme in this species is believed to be ubiquinone. Couples the redox reaction to proton translocation (for every two electrons transferred, four hydrogen ions are translocated across the cytoplasmic membrane), and thus conserves the redox energy in a proton gradient. The sequence is that of NADH-quinone oxidoreductase subunit D from Leptospira interrogans serogroup Icterohaemorrhagiae serovar copenhageni (strain Fiocruz L1-130).